Reading from the N-terminus, the 333-residue chain is Nucleoid-associated protein PSPPH_1145 (333 aa).

This sequence belongs to the YejK family.

The protein localises to the cytoplasm. Its subcellular location is the nucleoid. The sequence is that of Nucleoid-associated protein PSPPH_1145 from Pseudomonas savastanoi pv. phaseolicola (strain 1448A / Race 6) (Pseudomonas syringae pv. phaseolicola (strain 1448A / Race 6)).